We begin with the raw amino-acid sequence, 360 residues long: Mitogen-activated protein kinase 14 (360 aa).

Serine 2 carries the N-acetylserine modification. Position 2 is a phosphoserine (serine 2). The residue at position 16 (threonine 16) is a Phosphothreonine. Residues 24–308 (YQNLSPVGSG…AAQALAHAYF (285 aa)) enclose the Protein kinase domain. Residues 30 to 38 (VGSGAYGSV) and lysine 53 contribute to the ATP site. The residue at position 53 (lysine 53) is an N6-acetyllysine. Catalysis depends on aspartate 150, which acts as the Proton acceptor. An N6-acetyllysine modification is found at lysine 152. At threonine 180 the chain carries Phosphothreonine; by MAP2K3, MAP2K4, MAP2K6 and autocatalysis. At tyrosine 182 the chain carries Phosphotyrosine; by MAP2K3, MAP2K4, MAP2K6 and autocatalysis. Phosphothreonine is present on threonine 263. Tyrosine 323 carries the phosphotyrosine; by ZAP70 modification.

It belongs to the protein kinase superfamily. CMGC Ser/Thr protein kinase family. MAP kinase subfamily. Component of a signaling complex containing at least AKAP13, PKN1, MAPK14, ZAK and MAP2K3. Within this complex, AKAP13 interacts directly with PKN1, which in turn recruits MAPK14, MAP2K3 and ZAK. Binds to a kinase interaction motif within the protein tyrosine phosphatase, PTPRR. This interaction retains MAPK14 in the cytoplasm and prevents nuclear accumulation. Interacts with SPAG9 and GADD45A. Interacts with CDC25B, CDC25C, DUSP1, DUSP10, DUSP16, NP60, SUPT20H and TAB1. Interacts with casein kinase II subunits CSNK2A1 and CSNK2B. Interacts with PPM1D. Interacts with CDK5RAP3; recruits PPM1D to MAPK14 and may regulate its dephosphorylation. Interacts with DUSP2; this interaction does not lead to catalytic activation of DUSP2 and dephosphrylation of MAPK14. Mg(2+) is required as a cofactor. Post-translationally, dually phosphorylated on Thr-180 and Tyr-182 by the MAP2Ks MAP2K3/MKK3, MAP2K4/MKK4 and MAP2K6/MKK6 in response to inflammatory cytokines, environmental stress or growth factors, which activates the enzyme. Dual phosphorylation can also be mediated by TAB1-mediated autophosphorylation. TCR engagement in T-cells also leads to Tyr-323 phosphorylation by ZAP70. Dephosphorylated and inactivated by DUPS1, DUSP10 and DUSP16. PPM1D also mediates dephosphorylation and inactivation of MAPK14. Acetylated at Lys-53 and Lys-152 by KAT2B and EP300. Acetylation at Lys-53 increases the affinity for ATP and enhances kinase activity. Lys-53 and Lys-152 are deacetylated by HDAC3. In terms of processing, ubiquitinated. Ubiquitination leads to degradation by the proteasome pathway.

The protein resides in the cytoplasm. It is found in the nucleus. The catalysed reaction is L-seryl-[protein] + ATP = O-phospho-L-seryl-[protein] + ADP + H(+). The enzyme catalyses L-threonyl-[protein] + ATP = O-phospho-L-threonyl-[protein] + ADP + H(+). Its activity is regulated as follows. Activated by cell stresses such as DNA damage, heat shock, osmotic shock, anisomycin and sodium arsenite, as well as pro-inflammatory stimuli such as bacterial lipopolysaccharide (LPS) and interleukin-1. Activation occurs through dual phosphorylation of Thr-180 and Tyr-182 by either of two dual specificity kinases, MAP2K3/MKK3 or MAP2K6/MKK6, and potentially also MAP2K4/MKK4, as well as by TAB1-mediated autophosphorylation. MAPK14 phosphorylated on both Thr-180 and Tyr-182 is 10-20-fold more active than MAPK14 phosphorylated only on Thr-180, whereas MAPK14 phosphorylated on Tyr-182 alone is inactive. whereas Thr-180 is necessary for catalysis, Tyr-182 may be required for auto-activation and substrate recognition. Phosphorylated at Tyr-323 by ZAP70 in an alternative activation pathway in response to TCR signaling in T-cells. This alternative pathway is inhibited by GADD45A. Inhibited by dual specificity phosphatases, such as DUSP1, DUSP10, and DUSP16. Specifically inhibited by the binding of pyridinyl-imidazole compounds, which are cytokine-suppressive anti-inflammatory drugs (CSAID). SB203580 is an inhibitor of MAPK14. Its function is as follows. Serine/threonine kinase which acts as an essential component of the MAP kinase signal transduction pathway. MAPK14 is one of the four p38 MAPKs which play an important role in the cascades of cellular responses evoked by extracellular stimuli such as pro-inflammatory cytokines or physical stress leading to direct activation of transcription factors. Accordingly, p38 MAPKs phosphorylate a broad range of proteins and it has been estimated that they may have approximately 200 to 300 substrates each. Some of the targets are downstream kinases which are activated through phosphorylation and further phosphorylate additional targets. RPS6KA5/MSK1 and RPS6KA4/MSK2 can directly phosphorylate and activate transcription factors such as CREB1, ATF1, the NF-kappa-B isoform RELA/NFKB3, STAT1 and STAT3, but can also phosphorylate histone H3 and the nucleosomal protein HMGN1. RPS6KA5/MSK1 and RPS6KA4/MSK2 play important roles in the rapid induction of immediate-early genes in response to stress or mitogenic stimuli, either by inducing chromatin remodeling or by recruiting the transcription machinery. On the other hand, two other kinase targets, MAPKAPK2/MK2 and MAPKAPK3/MK3, participate in the control of gene expression mostly at the post-transcriptional level, by phosphorylating ZFP36 (tristetraprolin) and ELAVL1, and by regulating EEF2K, which is important for the elongation of mRNA during translation. MKNK1/MNK1 and MKNK2/MNK2, two other kinases activated by p38 MAPKs, regulate protein synthesis by phosphorylating the initiation factor EIF4E2. MAPK14 also interacts with casein kinase II, leading to its activation through autophosphorylation and further phosphorylation of TP53/p53. In the cytoplasm, the p38 MAPK pathway is an important regulator of protein turnover. For example, CFLAR is an inhibitor of TNF-induced apoptosis whose proteasome-mediated degradation is regulated by p38 MAPK phosphorylation. In a similar way, MAPK14 phosphorylates the ubiquitin ligase SIAH2, regulating its activity towards EGLN3. MAPK14 may also inhibit the lysosomal degradation pathway of autophagy by interfering with the intracellular trafficking of the transmembrane protein ATG9. Another function of MAPK14 is to regulate the endocytosis of membrane receptors by different mechanisms that impinge on the small GTPase RAB5A. In addition, clathrin-mediated EGFR internalization induced by inflammatory cytokines and UV irradiation depends on MAPK14-mediated phosphorylation of EGFR itself as well as of RAB5A effectors. Ectodomain shedding of transmembrane proteins is regulated by p38 MAPKs as well. In response to inflammatory stimuli, p38 MAPKs phosphorylate the membrane-associated metalloprotease ADAM17. Such phosphorylation is required for ADAM17-mediated ectodomain shedding of TGF-alpha family ligands, which results in the activation of EGFR signaling and cell proliferation. Another p38 MAPK substrate is FGFR1. FGFR1 can be translocated from the extracellular space into the cytosol and nucleus of target cells, and regulates processes such as rRNA synthesis and cell growth. FGFR1 translocation requires p38 MAPK activation. In the nucleus, many transcription factors are phosphorylated and activated by p38 MAPKs in response to different stimuli. Classical examples include ATF1, ATF2, ATF6, ELK1, PTPRH, DDIT3, TP53/p53 and MEF2C and MEF2A. The p38 MAPKs are emerging as important modulators of gene expression by regulating chromatin modifiers and remodelers. The promoters of several genes involved in the inflammatory response, such as IL6, IL8 and IL12B, display a p38 MAPK-dependent enrichment of histone H3 phosphorylation on 'Ser-10' (H3S10ph) in LPS-stimulated myeloid cells. This phosphorylation enhances the accessibility of the cryptic NF-kappa-B-binding sites marking promoters for increased NF-kappa-B recruitment. Phosphorylates CDC25B and CDC25C which is required for binding to 14-3-3 proteins and leads to initiation of a G2 delay after ultraviolet radiation. Phosphorylates TIAR following DNA damage, releasing TIAR from GADD45A mRNA and preventing mRNA degradation. The p38 MAPKs may also have kinase-independent roles, which are thought to be due to the binding to targets in the absence of phosphorylation. Protein O-Glc-N-acylation catalyzed by the OGT is regulated by MAPK14, and, although OGT does not seem to be phosphorylated by MAPK14, their interaction increases upon MAPK14 activation induced by glucose deprivation. This interaction may regulate OGT activity by recruiting it to specific targets such as neurofilament H, stimulating its O-Glc-N-acylation. Required in mid-fetal development for the growth of embryo-derived blood vessels in the labyrinth layer of the placenta. Also plays an essential role in developmental and stress-induced erythropoiesis, through regulation of EPO gene expression. Phosphorylates S100A9 at 'Thr-113'. The polypeptide is Mitogen-activated protein kinase 14 (Pan troglodytes (Chimpanzee)).